Consider the following 2156-residue polypeptide: Probable capsid protein 3 (2156 aa).

Positions 1319–1345 (NKSNKSNKSNESDKSSESDKSSESSNH) are disordered. The span at 1326 to 1345 (KSNESDKSSESDKSSESSNH) shows a compositional bias: basic and acidic residues.

Belongs to the NCLDV major capsid protein family.

It localises to the virion. This Acanthamoeba polyphaga mimivirus (APMV) protein is Probable capsid protein 3.